A 102-amino-acid chain; its full sequence is Small ribosomal subunit protein uS10 (102 aa).

It belongs to the universal ribosomal protein uS10 family. Part of the 30S ribosomal subunit.

Functionally, involved in the binding of tRNA to the ribosomes. This is Small ribosomal subunit protein uS10 from Streptococcus uberis (strain ATCC BAA-854 / 0140J).